A 471-amino-acid polypeptide reads, in one-letter code: UDP-N-acetylmuramate--L-alanine ligase (471 aa).

Residue 114–120 participates in ATP binding; it reads GTHGKTT.

Belongs to the MurCDEF family.

Its subcellular location is the cytoplasm. The catalysed reaction is UDP-N-acetyl-alpha-D-muramate + L-alanine + ATP = UDP-N-acetyl-alpha-D-muramoyl-L-alanine + ADP + phosphate + H(+). It participates in cell wall biogenesis; peptidoglycan biosynthesis. Functionally, cell wall formation. This Chlorobaculum parvum (strain DSM 263 / NCIMB 8327) (Chlorobium vibrioforme subsp. thiosulfatophilum) protein is UDP-N-acetylmuramate--L-alanine ligase.